The sequence spans 627 residues: CTP synthase (627 aa).

Positions 300-554 (CIAVVGKYTK…LASVDRLNQY (255 aa)) constitute a Glutamine amidotransferase type-1 domain. Catalysis depends on for GATase activity residues Cys399, His526, and Glu528. Phosphoserine occurs at positions 567, 570, 571, and 588. A Phosphothreonine modification is found at Thr595. Polar residues predominate over residues 599–613 (GISKSCNGSISTSDS). The interval 599–627 (GISKSCNGSISTSDSEGACGGVDPTNGHK) is disordered.

It belongs to the CTP synthase family. In ovary, expressed in oocytes, follicle cells and nurse cells. Also expressed in larval and adult testis (at protein level). In larvae, expressed in lymph gland, salivary gland, regions of the midgut, testis, optical lobe and trachea. Isoform 1 is expressed in adult testis, ovary, accessory gland and head. Isoform 2 is weakly expressed in ovary.

The protein resides in the cytoplasm. The enzyme catalyses UTP + L-glutamine + ATP + H2O = CTP + L-glutamate + ADP + phosphate + 2 H(+). The protein operates within pyrimidine metabolism; CTP biosynthesis via de novo pathway; CTP from UDP: step 2/2. Its function is as follows. Catalyzes the ATP-dependent amination of UTP to CTP with either L-glutamine or ammonia as the source of nitrogen. Constitutes the rate-limiting enzyme in the synthesis of cytosine nucleotides. Functionally, required for assembly of cytoophidium in female germline cells. In nurse cells, CTPsyn filament assembly in the cytoophidium is regulated by Ack kinase which may thereby contribute to the control of CTP production at specific stages of oogenesis and development of the nurse cell membrane. The chain is CTP synthase from Drosophila melanogaster (Fruit fly).